Consider the following 827-residue polypeptide: Periplasmic nitrate reductase (827 aa).

The segment at residues 1–32 is a signal peptide (tat-type signal); it reads MELSRRDFMKANAAVAAAAAAGIVLPVKNVQA. Residues 37-93 form the 4Fe-4S Mo/W bis-MGD-type domain; that stretch reads IKWDKAPCRFCGTGCSVLVGTKDGRVVATQGDPDAEVNRGLNCIKGYFLSKIMYGAD. [4Fe-4S] cluster-binding residues include cysteine 44, cysteine 47, cysteine 51, and cysteine 79. Residues lysine 81, glutamine 148, asparagine 173, cysteine 177, 210 to 217, 241 to 245, methionine 371, glutamine 375, asparagine 481, 507 to 508, lysine 530, aspartate 557, and 717 to 726 contribute to the Mo-bis(molybdopterin guanine dinucleotide) site; these read WGSNMAEM, STFEH, SD, and TGRVLEHWHT. Phenylalanine 793 provides a ligand contact to substrate. Mo-bis(molybdopterin guanine dinucleotide)-binding residues include asparagine 801 and lysine 818.

Belongs to the prokaryotic molybdopterin-containing oxidoreductase family. NasA/NapA/NarB subfamily. In terms of assembly, component of the periplasmic nitrate reductase NapAB complex composed of NapA and NapB. It depends on [4Fe-4S] cluster as a cofactor. Mo-bis(molybdopterin guanine dinucleotide) serves as cofactor. In terms of processing, predicted to be exported by the Tat system. The position of the signal peptide cleavage has not been experimentally proven.

The protein resides in the periplasm. It carries out the reaction 2 Fe(II)-[cytochrome] + nitrate + 2 H(+) = 2 Fe(III)-[cytochrome] + nitrite + H2O. Its function is as follows. Catalytic subunit of the periplasmic nitrate reductase complex NapAB. Receives electrons from NapB and catalyzes the reduction of nitrate to nitrite. The sequence is that of Periplasmic nitrate reductase from Haemophilus ducreyi (strain 35000HP / ATCC 700724).